The chain runs to 492 residues: Tyrosine--tRNA ligase, mitochondrial (492 aa).

An L-tyrosine-binding site is contributed by Y89. Residue D93 coordinates ATP. Residues 94 to 103 (PTAQSLHLGN) carry the 'HIGH' region motif. L-tyrosine-binding residues include D133, Y239, Q243, D246, and Q265. The short motif at 303–307 (KFGKS) is the 'KMSKS' region element. K306 is a binding site for ATP.

It belongs to the class-I aminoacyl-tRNA synthetase family. As to quaternary structure, homodimer.

The protein localises to the mitochondrion matrix. The enzyme catalyses tRNA(Tyr) + L-tyrosine + ATP = L-tyrosyl-tRNA(Tyr) + AMP + diphosphate + H(+). Catalyzes the attachment of tyrosine to tRNA(Tyr) in a two-step reaction: tyrosine is first activated by ATP to form Tyr-AMP and then transferred to the acceptor end of tRNA(Tyr). In Saccharomyces cerevisiae (strain ATCC 204508 / S288c) (Baker's yeast), this protein is Tyrosine--tRNA ligase, mitochondrial (MSY1).